Consider the following 57-residue polypeptide: Large ribosomal subunit protein bL32 (57 aa).

The segment covering 1 to 22 has biased composition (basic residues); the sequence is MAVPKKKTSKAKRDQRRAHWRR. The segment at 1 to 35 is disordered; the sequence is MAVPKKKTSKAKRDQRRAHWRRQASSQAQKALSLG.

Belongs to the bacterial ribosomal protein bL32 family.

The chain is Large ribosomal subunit protein bL32 (rpmF) from Synechocystis sp. (strain ATCC 27184 / PCC 6803 / Kazusa).